Reading from the N-terminus, the 203-residue chain is LexA repressor (203 aa).

A DNA-binding region (H-T-H motif) is located at residues 28 to 48 (RAEIASQLGFRSPNAAEEHLK). Residues serine 120 and lysine 157 each act as for autocatalytic cleavage activity in the active site.

This sequence belongs to the peptidase S24 family. As to quaternary structure, homodimer.

It catalyses the reaction Hydrolysis of Ala-|-Gly bond in repressor LexA.. Functionally, represses a number of genes involved in the response to DNA damage (SOS response), including recA and lexA. Binds to the 16 bp palindromic sequence 5'-CTGTATATATATACAG-3'. In the presence of single-stranded DNA, RecA interacts with LexA causing an autocatalytic cleavage which disrupts the DNA-binding part of LexA, leading to derepression of the SOS regulon and eventually DNA repair. In Proteus mirabilis (strain HI4320), this protein is LexA repressor.